We begin with the raw amino-acid sequence, 111 residues long: uncharacterized protein (111 aa).

The HIT domain maps to Leu8–Lys111. A Histidine triad motif motif is present at residues His100 to His104.

This is an uncharacterized protein from Mesomycoplasma hyorhinis (Mycoplasma hyorhinis).